The sequence spans 44 residues: Photosystem I reaction center subunit IX (44 aa).

The helical transmembrane segment at 7-27 (YLSAAPVLSTIWFGALAGLLI) threads the bilayer.

This sequence belongs to the PsaJ family.

It is found in the plastid. The protein localises to the chloroplast thylakoid membrane. Its function is as follows. May help in the organization of the PsaE and PsaF subunits. The chain is Photosystem I reaction center subunit IX from Pelargonium hortorum (Common geranium).